Reading from the N-terminus, the 2353-residue chain is Nonribosomal peptide synthetase 7 (2353 aa).

Residues 305–684 form an adenylation 1 region; the sequence is TFSALNTRAN…AIEEVEDSAV (380 aa). The Carrier 1 domain occupies 776–853; it reads RDLTDSEKVV…QVAAAVQPQP (78 aa). Ser813 carries the post-translational modification O-(pantetheine 4'-phosphoryl)serine. A condensation 1 region spans residues 885 to 1147; the sequence is EDAFPVTPFQ…LMVAPLRVKV (263 aa). The interval 1338 to 1725 is adenylation 2; it reads TYAGLAIKMN…QTNVFRQCAV (388 aa). Residues 1826 to 1902 enclose the Carrier 2 domain; the sequence is EICSEAEREL…EQAALMVQGQ (77 aa). An O-(pantetheine 4'-phosphoryl)serine modification is found at Ser1863. The interval 1939-2214 is condensation 2; it reads EDIYPCSPGQ…NGNCANFLPY (276 aa).

This sequence belongs to the NRP synthetase family.

Its function is as follows. Nonribosomal peptide synthesis (NRPS) is a key mechanism responsible for the biosynthesis of bioactive metabolites which are potentially contributing to organismal virulence. The polypeptide is Nonribosomal peptide synthetase 7 (NRPS7) (Aspergillus fumigatus (strain ATCC MYA-4609 / CBS 101355 / FGSC A1100 / Af293) (Neosartorya fumigata)).